The primary structure comprises 390 residues: Sister chromatid cohesion protein DCC1 (390 aa).

It belongs to the DCC1 family. In terms of assembly, component of the ctf18-RFC complex which consists of ctf18, ctf8, dscc1 and the RFC complex.

It is found in the nucleus. Loads pcna onto primed templates regulating velocity, spacing and restart activity of replication forks. May couple DNA replication to sister chromatid cohesion. This Xenopus laevis (African clawed frog) protein is Sister chromatid cohesion protein DCC1 (dscc1).